A 205-amino-acid chain; its full sequence is Small ribosomal subunit protein uS4 (205 aa).

The interval 18 to 46 (NIWGRPKSPVNRREYGPGQHGQRRKGKLS) is disordered. The S4 RNA-binding domain maps to 94–154 (RRLDTVVFRA…EASKQLAVVL (61 aa)).

This sequence belongs to the universal ribosomal protein uS4 family. As to quaternary structure, part of the 30S ribosomal subunit. Contacts protein S5. The interaction surface between S4 and S5 is involved in control of translational fidelity.

Functionally, one of the primary rRNA binding proteins, it binds directly to 16S rRNA where it nucleates assembly of the body of the 30S subunit. In terms of biological role, with S5 and S12 plays an important role in translational accuracy. This Bradyrhizobium sp. (strain ORS 278) protein is Small ribosomal subunit protein uS4.